The following is a 51-amino-acid chain: Insulin (51 aa).

Intrachain disulfides connect Cys-7-Cys-37, Cys-19-Cys-50, and Cys-36-Cys-41.

This sequence belongs to the insulin family. In terms of assembly, heterodimer of a B chain and an A chain linked by two disulfide bonds.

Its subcellular location is the secreted. Insulin decreases blood glucose concentration. It increases cell permeability to monosaccharides, amino acids and fatty acids. It accelerates glycolysis, the pentose phosphate cycle, and glycogen synthesis in liver. This Anguilla rostrata (American eel) protein is Insulin (ins).